A 545-amino-acid chain; its full sequence is CTP synthase (545 aa).

The segment at 1 to 265 is amidoligase domain; that stretch reads MSRFIFVTGG…DAIVVEKFGL (265 aa). CTP is bound at residue Ser-13. Ser-13 provides a ligand contact to UTP. 14–19 lines the ATP pocket; the sequence is SLGKGI. Tyr-54 is a binding site for L-glutamine. Residue Asp-71 coordinates ATP. Residues Asp-71 and Glu-139 each contribute to the Mg(2+) site. CTP is bound by residues 146 to 148, 186 to 191, and Lys-222; these read DIE and KTKPTQ. UTP-binding positions include 186–191 and Lys-222; that span reads KTKPTQ. Residues 290 to 541 enclose the Glutamine amidotransferase type-1 domain; sequence TVGMVGKYIE…VAAALAEQKA (252 aa). Position 351 (Gly-351) interacts with L-glutamine. The active-site Nucleophile; for glutamine hydrolysis is Cys-378. Residues 379 to 382, Glu-402, and Arg-469 each bind L-glutamine; that span reads LGMQ. Catalysis depends on residues His-514 and Glu-516.

It belongs to the CTP synthase family. As to quaternary structure, homotetramer.

It catalyses the reaction UTP + L-glutamine + ATP + H2O = CTP + L-glutamate + ADP + phosphate + 2 H(+). It carries out the reaction L-glutamine + H2O = L-glutamate + NH4(+). The catalysed reaction is UTP + NH4(+) + ATP = CTP + ADP + phosphate + 2 H(+). The protein operates within pyrimidine metabolism; CTP biosynthesis via de novo pathway; CTP from UDP: step 2/2. With respect to regulation, allosterically activated by GTP, when glutamine is the substrate; GTP has no effect on the reaction when ammonia is the substrate. The allosteric effector GTP functions by stabilizing the protein conformation that binds the tetrahedral intermediate(s) formed during glutamine hydrolysis. Inhibited by the product CTP, via allosteric rather than competitive inhibition. In terms of biological role, catalyzes the ATP-dependent amination of UTP to CTP with either L-glutamine or ammonia as the source of nitrogen. Regulates intracellular CTP levels through interactions with the four ribonucleotide triphosphates. This chain is CTP synthase, found in Alcanivorax borkumensis (strain ATCC 700651 / DSM 11573 / NCIMB 13689 / SK2).